The primary structure comprises 67 residues: UPF0337 protein BCE_3655 (67 aa).

Belongs to the UPF0337 (CsbD) family.

This is UPF0337 protein BCE_3655 from Bacillus cereus (strain ATCC 10987 / NRS 248).